The sequence spans 939 residues: Phosphoenolpyruvate carboxylase (939 aa).

Active-site residues include histidine 151 and lysine 593.

This sequence belongs to the PEPCase type 1 family. It depends on Mg(2+) as a cofactor.

It catalyses the reaction oxaloacetate + phosphate = phosphoenolpyruvate + hydrogencarbonate. Functionally, forms oxaloacetate, a four-carbon dicarboxylic acid source for the tricarboxylic acid cycle. This chain is Phosphoenolpyruvate carboxylase, found in Gloeobacter violaceus (strain ATCC 29082 / PCC 7421).